Here is a 260-residue protein sequence, read N- to C-terminus: Indole-3-glycerol phosphate synthase (260 aa).

The protein belongs to the TrpC family.

The enzyme catalyses 1-(2-carboxyphenylamino)-1-deoxy-D-ribulose 5-phosphate + H(+) = (1S,2R)-1-C-(indol-3-yl)glycerol 3-phosphate + CO2 + H2O. The protein operates within amino-acid biosynthesis; L-tryptophan biosynthesis; L-tryptophan from chorismate: step 4/5. This chain is Indole-3-glycerol phosphate synthase, found in Staphylococcus saprophyticus subsp. saprophyticus (strain ATCC 15305 / DSM 20229 / NCIMB 8711 / NCTC 7292 / S-41).